Consider the following 280-residue polypeptide: F420-dependent methylenetetrahydromethanopterin dehydrogenase (280 aa).

The protein belongs to the MTD family.

It catalyses the reaction 5,10-methylenetetrahydromethanopterin + oxidized coenzyme F420-(gamma-L-Glu)(n) + 2 H(+) = 5,10-methenyl-5,6,7,8-tetrahydromethanopterin + reduced coenzyme F420-(gamma-L-Glu)(n). It participates in one-carbon metabolism; methanogenesis from CO(2); 5,10-methylene-5,6,7,8-tetrahydromethanopterin from 5,10-methenyl-5,6,7,8-tetrahydromethanopterin (coenzyme F420 route): step 1/1. Catalyzes the reversible reduction of methenyl-H(4)MPT(+) to methylene-H(4)MPT. The protein is F420-dependent methylenetetrahydromethanopterin dehydrogenase of Methanosphaerula palustris (strain ATCC BAA-1556 / DSM 19958 / E1-9c).